The sequence spans 331 residues: Porphobilinogen deaminase (331 aa).

At cysteine 248 the chain carries S-(dipyrrolylmethanemethyl)cysteine. The interval 307 to 331 (QLLQAPKQTGEPHDPDRHDKGTGRP) is disordered. A compositionally biased stretch (basic and acidic residues) spans 316–331 (GEPHDPDRHDKGTGRP).

Belongs to the HMBS family. Monomer. Dipyrromethane is required as a cofactor.

It carries out the reaction 4 porphobilinogen + H2O = hydroxymethylbilane + 4 NH4(+). The protein operates within porphyrin-containing compound metabolism; protoporphyrin-IX biosynthesis; coproporphyrinogen-III from 5-aminolevulinate: step 2/4. In terms of biological role, tetrapolymerization of the monopyrrole PBG into the hydroxymethylbilane pre-uroporphyrinogen in several discrete steps. The sequence is that of Porphobilinogen deaminase from Acidothermus cellulolyticus (strain ATCC 43068 / DSM 8971 / 11B).